A 498-amino-acid polypeptide reads, in one-letter code: Cytochrome P450 monooxygenase apdB (498 aa).

Residues 20 to 40 (ASPQVFKLFVLILFVLLVLKI) traverse the membrane as a helical segment. C457 serves as a coordination point for heme.

The protein belongs to the cytochrome P450 family. Heme is required as a cofactor.

It is found in the membrane. The protein operates within secondary metabolite biosynthesis. In terms of biological role, cytochrome P450 monooxygenase; part of the gene cluster that mediates the biosynthesis of aspyridones. The polyketide-amino acid backbone preaspyridone A is first assembled by the PKS-NRPS hybrid apdA. The assembly of preaspyridone A is initiated by loading of malonyl-CoA onto apdA, followed by decarboxylation to yield the acetyl starter unit. The growing polyketide chain then elongates into a tetraketide. The adpA PKS module catalyzes three Claisen condensations, as well as beta-keto processing and methylation. Alpha-methylation step during polyketide synthesis is a prerequisite and a key checkpoint for chain transfer between PKS and NRPS modules. The downstream NRPS module contains the condensation (C), adenylation (A), and thiolation (T) domains and catalyzes the incorporation of tyrosine via the formation of the L-tyrosinyl-thioester and the amide linkage between L-tyrosinyl-thioester and the tetraketide. The bimodular assembly line is terminated with a reductase (R) domain that facilitates formation and release of the tetramic acid product. Because apdA lacks a designated enoylreductase (ER) domain, the required activity is provided the enoyl reductase apdC. ApdC appears to operate with different stereoselectivity in different PKS cycle. Combined with apdC, apdA is proposed to synthesize preaspyridone A via about 20 enzymatic steps. A number of oxidative steps performed successively by the cytochrome P450 monooxygenases apdE and apdB are required for the conversion of preaspyridone A to aspyridone A. The cytochrome P450 monooxygenase apdE is responsible for the oxidative dephenylation of preaspyridone A. Finally, the predicted FAD-dependent monooxygenase apdD and the acyl-CoA dehydrogenase apdG may be involved in the transformation of aspyridone A into aspyridone B. The sequence is that of Cytochrome P450 monooxygenase apdB from Emericella nidulans (strain FGSC A4 / ATCC 38163 / CBS 112.46 / NRRL 194 / M139) (Aspergillus nidulans).